We begin with the raw amino-acid sequence, 130 residues long: MAKVPSRSPRKRVRKQVADGMAHIHASFNNTIVTITDRQGNALSWATSGGSGFRGSRKSTPFAAQVAAERAGIAAQDYGLKNLEVFVKGPGPGRESAIRALNAVGYKITNITDVTPIPHNGCRPPKKRRV.

The protein belongs to the universal ribosomal protein uS11 family. In terms of assembly, part of the 30S ribosomal subunit. Interacts with proteins S7 and S18. Binds to IF-3.

In terms of biological role, located on the platform of the 30S subunit, it bridges several disparate RNA helices of the 16S rRNA. Forms part of the Shine-Dalgarno cleft in the 70S ribosome. The sequence is that of Small ribosomal subunit protein uS11 from Shewanella denitrificans (strain OS217 / ATCC BAA-1090 / DSM 15013).